A 263-amino-acid chain; its full sequence is Endonuclease 8 (263 aa).

Residue Pro-2 is the Schiff-base intermediate with DNA of the active site. The active-site Proton donor is Glu-3. Lys-53 acts as the Proton donor; for beta-elimination activity in catalysis. DNA contacts are provided by Gln-70, Arg-125, and Asn-169. The FPG-type zinc-finger motif lies at 229–263 (KVFHRDGESCERCGGIIERTMLSSRPFYWCPHCQR). Residue Arg-253 is the Proton donor; for delta-elimination activity of the active site.

Belongs to the FPG family. Zn(2+) is required as a cofactor.

The catalysed reaction is 2'-deoxyribonucleotide-(2'-deoxyribose 5'-phosphate)-2'-deoxyribonucleotide-DNA = a 3'-end 2'-deoxyribonucleotide-(2,3-dehydro-2,3-deoxyribose 5'-phosphate)-DNA + a 5'-end 5'-phospho-2'-deoxyribonucleoside-DNA + H(+). In terms of biological role, involved in base excision repair of DNA damaged by oxidation or by mutagenic agents. Acts as a DNA glycosylase that recognizes and removes damaged bases. Has a preference for oxidized pyrimidines, such as thymine glycol, 5,6-dihydrouracil and 5,6-dihydrothymine. Has AP (apurinic/apyrimidinic) lyase activity and introduces nicks in the DNA strand. Cleaves the DNA backbone by beta-delta elimination to generate a single-strand break at the site of the removed base with both 3'- and 5'-phosphates. This Pectobacterium carotovorum subsp. carotovorum (strain PC1) protein is Endonuclease 8.